The chain runs to 158 residues: Transcription elongation factor GreA (158 aa).

Belongs to the GreA/GreB family.

Necessary for efficient RNA polymerase transcription elongation past template-encoded arresting sites. The arresting sites in DNA have the property of trapping a certain fraction of elongating RNA polymerases that pass through, resulting in locked ternary complexes. Cleavage of the nascent transcript by cleavage factors such as GreA or GreB allows the resumption of elongation from the new 3'terminus. GreA releases sequences of 2 to 3 nucleotides. The polypeptide is Transcription elongation factor GreA (Rhizobium johnstonii (strain DSM 114642 / LMG 32736 / 3841) (Rhizobium leguminosarum bv. viciae)).